A 227-amino-acid chain; its full sequence is Ribonuclease 3 (227 aa).

One can recognise an RNase III domain in the interval 4-126 (LDRLERKIGY…IIGAMSLDQG (123 aa)). E39 is a Mg(2+) binding site. D43 is a catalytic residue. Mg(2+)-binding residues include D112 and E115. The active site involves E115. Residues 153 to 226 (DAKTRLQEYL…AEQILKELDI (74 aa)) form the DRBM domain.

This sequence belongs to the ribonuclease III family. Homodimer. The cofactor is Mg(2+).

Its subcellular location is the cytoplasm. The enzyme catalyses Endonucleolytic cleavage to 5'-phosphomonoester.. In terms of biological role, digests double-stranded RNA. Involved in the processing of primary rRNA transcript to yield the immediate precursors to the large and small rRNAs (23S and 16S). Processes some mRNAs, and tRNAs when they are encoded in the rRNA operon. Processes pre-crRNA and tracrRNA of type II CRISPR loci if present in the organism. This is Ribonuclease 3 from Haemophilus influenzae (strain PittGG).